We begin with the raw amino-acid sequence, 177 residues long: Probable nicotinate-nucleotide adenylyltransferase (177 aa).

This sequence belongs to the NadD family.

The enzyme catalyses nicotinate beta-D-ribonucleotide + ATP + H(+) = deamido-NAD(+) + diphosphate. It functions in the pathway cofactor biosynthesis; NAD(+) biosynthesis; deamido-NAD(+) from nicotinate D-ribonucleotide: step 1/1. Functionally, catalyzes the reversible adenylation of nicotinate mononucleotide (NaMN) to nicotinic acid adenine dinucleotide (NaAD). In Nitratiruptor sp. (strain SB155-2), this protein is Probable nicotinate-nucleotide adenylyltransferase.